Reading from the N-terminus, the 133-residue chain is Homeobox protein BarH-like 2 (133 aa).

The segment at residues 1–46 (ELEKEFQKQKYLSTPDRLDLAQSLGLTQLQVKTWYQNRRMKWKKMV) is a DNA-binding region (homeobox). Residues 45 to 133 (MVLKGGQEAP…VTSPEPPPSS (89 aa)) are disordered.

It belongs to the BAR homeobox family. As to expression, expressed in keratinizing epithelia such as wool follicle, tongue and esophagus. Expressed at low level in thymus. Not detected in spleen, skeletal muscle, brain, heart kidney, liver and lung.

Its subcellular location is the nucleus. Functionally, transcription factor. Binds optimally to the DNA consensus sequence 5'-YYTAATGRTTTTY-3'. May control the expression of neural adhesion molecules such as L1 or Ng-CAM during embryonic development of both the central and peripherical nervous system. May be involved in controlling adhesive processes in keratinizing epithelia. The protein is Homeobox protein BarH-like 2 (BARX2) of Ovis aries (Sheep).